The sequence spans 451 residues: Probable asparagine--tRNA ligase, cytoplasmic (451 aa).

It belongs to the class-II aminoacyl-tRNA synthetase family.

The protein resides in the cytoplasm. It catalyses the reaction tRNA(Asn) + L-asparagine + ATP = L-asparaginyl-tRNA(Asn) + AMP + diphosphate + H(+). The protein is Probable asparagine--tRNA ligase, cytoplasmic of Encephalitozoon cuniculi (strain GB-M1) (Microsporidian parasite).